The chain runs to 303 residues: Protease HtpX homolog (303 aa).

2 helical membrane passes run 4–24 (VVLFLLTNLAVIAVLSITARI) and 38–58 (MGMLLAFAALIGFGGAFISLL). Histidine 144 serves as a coordination point for Zn(2+). The active site involves glutamate 145. A Zn(2+)-binding site is contributed by histidine 148. Helical transmembrane passes span 152–172 (GDMVTLTLIQGVVNTFVIFLS) and 199–219 (ISSIAFEIVFGVLASIVVMYF). Glutamate 224 lines the Zn(2+) pocket.

Belongs to the peptidase M48B family. The cofactor is Zn(2+).

It localises to the cell inner membrane. The polypeptide is Protease HtpX homolog (Chlorobium phaeobacteroides (strain BS1)).